The chain runs to 307 residues: Pseudouridine-5'-phosphate glycosidase (307 aa).

The Proton donor role is filled by Glu-28. Residues Lys-89 and Val-109 each coordinate substrate. Asp-141 contributes to the Mn(2+) binding site. Position 143–145 (143–145 (SAD)) interacts with substrate. Residue Lys-162 is the Nucleophile of the active site.

It belongs to the pseudouridine-5'-phosphate glycosidase family. In terms of assembly, homotrimer. Mn(2+) is required as a cofactor.

The catalysed reaction is D-ribose 5-phosphate + uracil = psi-UMP + H2O. Catalyzes the reversible cleavage of pseudouridine 5'-phosphate (PsiMP) to ribose 5-phosphate and uracil. Functions biologically in the cleavage direction, as part of a pseudouridine degradation pathway. In Nocardioides sp. (strain ATCC BAA-499 / JS614), this protein is Pseudouridine-5'-phosphate glycosidase.